Reading from the N-terminus, the 131-residue chain is ATP synthase epsilon chain, chloroplastic (131 aa).

Belongs to the ATPase epsilon chain family. In terms of assembly, F-type ATPases have 2 components, CF(1) - the catalytic core - and CF(0) - the membrane proton channel. CF(1) has five subunits: alpha(3), beta(3), gamma(1), delta(1), epsilon(1). CF(0) has three main subunits: a, b and c.

It is found in the plastid. Its subcellular location is the chloroplast thylakoid membrane. Its function is as follows. Produces ATP from ADP in the presence of a proton gradient across the membrane. The polypeptide is ATP synthase epsilon chain, chloroplastic (Cyanidioschyzon merolae (strain NIES-3377 / 10D) (Unicellular red alga)).